Reading from the N-terminus, the 315-residue chain is Porphobilinogen deaminase (315 aa).

The residue at position 245 (cysteine 245) is an S-(dipyrrolylmethanemethyl)cysteine.

The protein belongs to the HMBS family. As to quaternary structure, monomer. The cofactor is dipyrromethane.

The catalysed reaction is 4 porphobilinogen + H2O = hydroxymethylbilane + 4 NH4(+). Its pathway is porphyrin-containing compound metabolism; protoporphyrin-IX biosynthesis; coproporphyrinogen-III from 5-aminolevulinate: step 2/4. It participates in porphyrin-containing compound metabolism; chlorophyll biosynthesis. Its function is as follows. Tetrapolymerization of the monopyrrole PBG into the hydroxymethylbilane pre-uroporphyrinogen in several discrete steps. This is Porphobilinogen deaminase from Prochlorococcus marinus (strain NATL2A).